A 311-amino-acid chain; its full sequence is Protoheme IX farnesyltransferase (311 aa).

The next 9 helical transmembrane spans lie at 32 to 52, 53 to 73, 104 to 124, 125 to 145, 153 to 173, 180 to 200, 224 to 244, 245 to 265, and 285 to 305; these read VMSL…VPIN, PWYG…AGAL, FIFG…FINW, FAAF…TIWL, IVIG…VTTG, FLLF…LSLF, KQIL…CFTG, LGGV…IYFA, and FFFS…ESLV.

Belongs to the UbiA prenyltransferase family. Protoheme IX farnesyltransferase subfamily.

It localises to the cell inner membrane. The enzyme catalyses heme b + (2E,6E)-farnesyl diphosphate + H2O = Fe(II)-heme o + diphosphate. Its pathway is porphyrin-containing compound metabolism; heme O biosynthesis; heme O from protoheme: step 1/1. Functionally, converts heme B (protoheme IX) to heme O by substitution of the vinyl group on carbon 2 of heme B porphyrin ring with a hydroxyethyl farnesyl side group. The sequence is that of Protoheme IX farnesyltransferase from Bartonella tribocorum (strain CIP 105476 / IBS 506).